Here is a 559-residue protein sequence, read N- to C-terminus: Serine/threonine-protein kinase bur1 (559 aa).

A Protein kinase domain is found at 40–341 (YEVLGKLGEG…AIDALNHPYF (302 aa)). ATP-binding positions include 46-54 (LGEGTFGEV) and lysine 69. Aspartate 171 (proton acceptor) is an active-site residue. Basic and acidic residues predominate over residues 359-372 (SHEFDRRKFQDRKA). A disordered region spans residues 359 to 559 (SHEFDRRKFQ…GRDRDAYARR (201 aa)). Residues 400-414 (GRDGYGGGGRNGANG) are compositionally biased toward gly residues. Composition is skewed to basic and acidic residues over residues 457–467 (DHTDGYRDRPP), 491–534 (YDRD…DSRT), and 543–559 (PVRD…YARR).

Belongs to the protein kinase superfamily. CMGC Ser/Thr protein kinase family. CDC2/CDKX subfamily.

It localises to the nucleus. It catalyses the reaction L-seryl-[protein] + ATP = O-phospho-L-seryl-[protein] + ADP + H(+). It carries out the reaction L-threonyl-[protein] + ATP = O-phospho-L-threonyl-[protein] + ADP + H(+). The catalysed reaction is [DNA-directed RNA polymerase] + ATP = phospho-[DNA-directed RNA polymerase] + ADP + H(+). Functionally, serine/threonine-protein kinase involved in transcription regulation. Phosphorylates the mus-8/ubc2 ubiquitin-conjugating enzyme (E2), leading to monoubiquitination of histone H2B and the silencing of telomeric-associated genes. Also required for histone H3 methylation. Necessary for the recovery from pheromone-induced growth arrest in the cell cycle G1 phase. This chain is Serine/threonine-protein kinase bur1 (stk-1), found in Neurospora crassa (strain ATCC 24698 / 74-OR23-1A / CBS 708.71 / DSM 1257 / FGSC 987).